The chain runs to 293 residues: ATP synthase gamma chain (293 aa).

This sequence belongs to the ATPase gamma chain family. As to quaternary structure, F-type ATPases have 2 components, CF(1) - the catalytic core - and CF(0) - the membrane proton channel. CF(1) has five subunits: alpha(3), beta(3), gamma(1), delta(1), epsilon(1). CF(0) has three main subunits: a, b and c.

It localises to the cell inner membrane. Functionally, produces ATP from ADP in the presence of a proton gradient across the membrane. The gamma chain is believed to be important in regulating ATPase activity and the flow of protons through the CF(0) complex. This Psychrobacter cryohalolentis (strain ATCC BAA-1226 / DSM 17306 / VKM B-2378 / K5) protein is ATP synthase gamma chain.